The sequence spans 102 residues: Small ribosomal subunit protein uS10 (102 aa).

The segment at 34–61 (MAGPIPLPTKTLKVTTRKSTDGEGSSSF) is disordered.

It belongs to the universal ribosomal protein uS10 family. As to quaternary structure, part of the 30S ribosomal subunit.

Functionally, involved in the binding of tRNA to the ribosomes. In Methanococcus aeolicus (strain ATCC BAA-1280 / DSM 17508 / OCM 812 / Nankai-3), this protein is Small ribosomal subunit protein uS10.